The following is a 418-amino-acid chain: Acyl-coenzyme A amino acid N-acyltransferase 2 (418 aa).

Active-site charge relay system residues include serine 234, aspartate 327, and histidine 361. The short motif at 416–418 is the Microbody targeting signal element; it reads GKL.

It belongs to the C/M/P thioester hydrolase family.

It localises to the peroxisome. Its function is as follows. Acyltransferase which efficiently conjugates very long-chain and long-chain fatty acids to taurine. Shows no conjugation activity in the presence of glycine. In Rattus norvegicus (Rat), this protein is Acyl-coenzyme A amino acid N-acyltransferase 2.